The primary structure comprises 1487 residues: Collagen alpha-1(II) chain (1487 aa).

The signal sequence occupies residues 1-25 (MIRLGAPQTLVLLTLLVAAVLRCQG). A propeptide spans 26-181 (QDVQEAGSCV…PPGLGGNFAA (156 aa)) (N-terminal propeptide). A VWFC domain is found at 32–90 (GSCVQDGQRYNDKDVWKPEPCRICVCDTGTVLCDDIICEDVKDCLSPEIPFGECCPICP). The segment at 97 to 1237 (SGQPGPKGQK…PREKGPDPLQ (1141 aa)) is disordered. Basic and acidic residues-rich tracts occupy residues 105-116 (QKGEPGDIKDIV) and 133-154 (PRGD…RDGE). Residues 158-173 (PGNPGPPGPPGPPGPP) show a composition bias toward pro residues. Lys-190 carries the post-translational modification 5-hydroxylysine. O-linked (Gal...) hydroxylysine glycosylation occurs at Lys-190. The tract at residues 201–1214 (GPMGPMGPRG…PGPPGPPGPP (1014 aa)) is triple-helical region. Pro residues predominate over residues 208–217 (PRGPPGPAGA). Low complexity predominate over residues 218–239 (PGPQGFQGNPGEPGEPGVSGPM). Residues 241-250 (PRGPPGPPGK) show a composition bias toward pro residues. The span at 251 to 265 (PGDDGEAGKPGKAGE) shows a compositional bias: basic and acidic residues. 3 positions are modified to 5-hydroxylysine: Lys-287, Lys-299, and Lys-308. 3 O-linked (Gal...) hydroxylysine glycosylation sites follow: Lys-287, Lys-299, and Lys-308. Composition is skewed to low complexity over residues 310 to 320 (ESGSPGENGSP) and 335 to 350 (TGPA…DGQP). A compositionally biased stretch (gly residues) spans 360–369 (GPAGGPGFPG). 2 stretches are compositionally biased toward low complexity: residues 370 to 382 (APGA…PTGA) and 391 to 431 (PRGE…AGAP). The residue at position 374 (Lys-374) is a 5-hydroxylysine. An O-linked (Gal...) hydroxylysine glycan is attached at Lys-374. Pro residues predominate over residues 433-442 (FPGPRGPPGP). A 5-hydroxylysine mark is found at Lys-608 and Lys-620. O-linked (Gal...) hydroxylysine glycosylation is found at Lys-608 and Lys-620. Composition is skewed to low complexity over residues 622-631 (LPGAPGLRGL) and 656-667 (QGAPGPSGFQGL). Pro-659 and Pro-668 each carry 4-hydroxyproline. At Pro-670 the chain carries 3-hydroxyproline. Pro-671 and Pro-674 each carry 4-hydroxyproline. Residues 764–775 (KGDRGDVGEKGP) show a composition bias toward basic and acidic residues. Composition is skewed to low complexity over residues 833–848 (AGFA…PGAK) and 877–913 (PTGV…SNGN). 3-hydroxyproline is present on Pro-907. 3 positions are modified to 4-hydroxyproline: Pro-908, Pro-914, and Pro-920. A compositionally biased stretch (pro residues) spans 1069–1079 (APGPPGSPGPA). Positions 1115-1129 (RGDKGEAGEPGERGL) are enriched in basic and acidic residues. The residue at position 1130 (Lys-1130) is a 5-hydroxylysine. O-linked (Gal...) hydroxylysine glycosylation occurs at Lys-1130. Position 1144 is a 3-hydroxyproline (Pro-1144). Positions 1148 to 1157 (SGDQGASGPA) are enriched in low complexity. Residue Pro-1181 is modified to 4-hydroxyproline. Pro-1186 is modified (3-hydroxyproline). Pro-1187 carries the post-translational modification 4-hydroxyproline. Residues 1199-1216 (AGPPGNPGPPGPPGPPGP) show a composition bias toward pro residues. Pro-1201 is modified (3-hydroxyproline). 2 positions are modified to 4-hydroxyproline: Pro-1202 and Pro-1205. Pro-1207 is modified (3-hydroxyproline). Pro-1208 and Pro-1211 each carry 4-hydroxyproline. At Pro-1213 the chain carries 3-hydroxyproline. Pro-1214 carries the post-translational modification 4-hydroxyproline. A nonhelical region (C-terminal) region spans residues 1215-1241 (GPGIDMSAFAGLGPREKGPDPLQYMRA). The Fibrillar collagen NC1 domain maps to 1253 to 1487 (AEVDATLKSL…GVDIGPVCFL (235 aa)). Disulfide bonds link Cys-1283–Cys-1315, Cys-1323–Cys-1485, and Cys-1393–Cys-1438. Asp-1301, Asn-1303, Gln-1304, Cys-1306, and Asp-1309 together coordinate Ca(2+). Asn-1388 is a glycosylation site (N-linked (GlcNAc...) asparagine).

It belongs to the fibrillar collagen family. As to quaternary structure, homotrimers of alpha 1(II) chains. In terms of processing, the N-telopeptide is covalently linked to the helical COL2 region of alpha 1(IX), alpha 2(IX) and alpha 3(IX) chain. The C-telopeptide is covalently linked to an another site in the helical region of alpha 3(IX) COL2. Post-translationally, contains mostly 4-hydroxyproline. Prolines at the third position of the tripeptide repeating unit (G-X-P) are 4-hydroxylated in some or all of the chains. Contains 3-hydroxyproline at a few sites. This modification occurs on the first proline residue in the sequence motif Gly-Pro-Hyp, where Hyp is 4-hydroxyproline. In terms of processing, lysine residues at the third position of the tripeptide repeating unit (G-X-Y) are 5-hydroxylated in some or all of the chains. Post-translationally, O-glycosylated on hydroxylated lysine residues. The O-linked glycan consists of a Glc-Gal disaccharide. In terms of tissue distribution, isoform 2 is highly expressed in juvenile chondrocyte and low in fetal chondrocyte.

Its subcellular location is the secreted. The protein resides in the extracellular space. It is found in the extracellular matrix. In terms of biological role, type II collagen is specific for cartilaginous tissues. It is essential for the normal embryonic development of the skeleton, for linear growth and for the ability of cartilage to resist compressive forces. This is Collagen alpha-1(II) chain from Homo sapiens (Human).